The sequence spans 432 residues: C(50) beta-cyclic carotenoids biosynthesis protein LbtBC (432 aa).

The interval 1–140 is beta-cyclase; sequence MTSLYTTLNL…DDDEVRTPER (140 aa). The next 3 helical transmembrane spans lie at 4–24, 36–56, and 83–103; these read LYTT…LLAA, LIGV…FDNI, and FAYA…LTAS. The interval 111 to 140 is disordered; that stretch reads GSPTVSGRGDALLTRAPEPGDDDEVRTPER. Positions 141 to 432 are elongase/hydratase; that stretch reads PGTPGLLTTL…IVLWSVLVWS (292 aa). 7 helical membrane passes run 170-190, 252-272, 277-297, 299-319, 350-370, 374-394, and 409-429; these read YFLA…FFLV, ESSL…AKGL, IPFL…IVGW, IAGA…MLWG, AAVW…LAAA, ASGA…YVGV, and FLVL…WSVL.

It belongs to the UbiA prenyltransferase family. In terms of assembly, may form a complex with LbtA.

The protein resides in the cell membrane. It carries out the reaction all-trans-lycopene + dimethylallyl diphosphate + H2O = dihydroisopentenyldehydrorhodopin + diphosphate. It catalyses the reaction isopentenyldehydrorhodopin + dimethylallyl diphosphate + H2O = dihydrobisanhydrobacterioruberin + diphosphate. Its pathway is carotenoid biosynthesis. Functionally, involved in the biosynthesis of C(50) beta-cyclic carotenoids. The elongase/hydratase domain catalyzes the elongation of lycopene by attaching a C(5) isoprene unit at C-2, as well as the hydroxylation of the previous end of the molecule. The enzyme acts at both ends of the substrate, and catalyzes the conversion of lycopene to the C(45) intermediate dihydroisopentenyldehydrorhodopin (DH-IDR) and the conversion of isopentenyldehydrorhodopin (IDR) to the C(50) carotenoid dihydrobisanhydrobacterioruberin (DH-BABR). The beta-cyclase domain may produce the C(50) beta-cyclic carotenoid C.p.450 from the C(50) carotenoid dihydrobisanhydrobacterioruberin (DH-BABR). In Dietzia sp. (strain CQ4), this protein is C(50) beta-cyclic carotenoids biosynthesis protein LbtBC.